A 236-amino-acid polypeptide reads, in one-letter code: Small ribosomal subunit protein uS5 (236 aa).

The S5 DRBM domain maps to 61-124 (ENQEIIDIAL…NYAKLNIIEI (64 aa)).

Belongs to the universal ribosomal protein uS5 family. In terms of assembly, part of the 30S ribosomal subunit. Contacts protein S4.

With S4 and S12 plays an important role in translational accuracy. This chain is Small ribosomal subunit protein uS5, found in Pyrococcus horikoshii (strain ATCC 700860 / DSM 12428 / JCM 9974 / NBRC 100139 / OT-3).